Consider the following 102-residue polypeptide: Small ribosomal subunit protein uS10 (102 aa).

It belongs to the universal ribosomal protein uS10 family. As to quaternary structure, part of the 30S ribosomal subunit.

In terms of biological role, involved in the binding of tRNA to the ribosomes. The protein is Small ribosomal subunit protein uS10 of Moorella thermoacetica (strain ATCC 39073 / JCM 9320).